The primary structure comprises 443 residues: Xaa-Pro dipeptidase (443 aa).

Residues D246, D257, H339, E384, and E423 each coordinate Mn(2+).

Belongs to the peptidase M24B family. Bacterial-type prolidase subfamily. It depends on Mn(2+) as a cofactor.

The catalysed reaction is Xaa-L-Pro dipeptide + H2O = an L-alpha-amino acid + L-proline. Splits dipeptides with a prolyl residue in the C-terminal position. This is Xaa-Pro dipeptidase from Shigella dysenteriae serotype 1 (strain Sd197).